The sequence spans 250 residues: Putative inner dynein arm light chain, axonemal (250 aa).

Residues 168–250 (MRKALQAHEE…QLEGITAPKK (83 aa)) adopt a coiled-coil conformation.

It belongs to the inner dynein arm light chain family.

It is found in the cell projection. The protein localises to the cilium. The protein resides in the dynein axonemal particle. May play a dynamic role in flagellar motility. The protein is Putative inner dynein arm light chain, axonemal of Drosophila melanogaster (Fruit fly).